Reading from the N-terminus, the 420-residue chain is Trophoblast glycoprotein (420 aa).

The first 31 residues, 1 to 31 (MPGGCSRGPAAGDGRLRLARLALVLLGWVSS), serve as a signal peptide directing secretion. The Extracellular segment spans residues 32-355 (SSPTSSASSF…PILPPSLQTS (324 aa)). Residues 53 to 91 (SAQPPLPDQCPALCECSEAARTVKCVNRNLTEVPTDLPA) enclose the LRRNT domain. 2 disulfide bridges follow: Cys62/Cys68 and Cys66/Cys77. N-linked (GlcNAc...) asparagine glycosylation occurs at Asn81. 7 LRR repeats span residues 92-113 (YVRN…AFAR), 116-139 (PLAE…GAFE), 141-163 (LPSL…FAFS), 172-204 (PSPL…AALL), 209-232 (LQGL…VLAQ), 233-255 (LPSL…VSFR), and 256-275 (NLTH…VLHN). Asn124 is a glycosylation site (N-linked (GlcNAc...) asparagine). Residue Asn275 is glycosylated (N-linked (GlcNAc...) asparagine). The LRRCT domain maps to 283–346 (GLPHIRVFLD…LNSADLDCDP (64 aa)). 2 cysteine pairs are disulfide-bonded: Cys298–Cys323 and Cys300–Cys344. Residues 356 to 376 (YVFLGIVLALIGAIFLLVLYL) form a helical membrane-spanning segment. Topologically, residues 377–420 (NRKGIKKWMHNIRDACRDHMEGYHYRYEINADPRLTNLSSNSDV) are cytoplasmic. Ser418 bears the Phosphoserine mark.

Highly glycosylated. Expressed by all types of trophoblasts as early as 9 weeks of development. Specific for trophoblastic cells except for amniotic epithelium. In adult tissues, the expression is limited to a few epithelial cell types but is found on a variety of carcinoma.

It localises to the cell membrane. Its function is as follows. May function as an inhibitor of Wnt/beta-catenin signaling by indirectly interacting with LRP6 and blocking Wnt3a-dependent LRP6 internalization. This is Trophoblast glycoprotein (TPBG) from Homo sapiens (Human).